The primary structure comprises 379 residues: Chaperone protein DnaJ (379 aa).

The region spanning 5–70 (DYYEVLGLSK…EKKAMYDQYG (66 aa)) is the J domain. The CR-type zinc-finger motif lies at 136–214 (GCKKDIRIHT…CHGDGRVHKA (79 aa)). Residues Cys-149, Cys-152, Cys-166, Cys-169, Cys-188, Cys-191, Cys-202, and Cys-205 each contribute to the Zn(2+) site. CXXCXGXG motif repeat units follow at residues 149-156 (CDTCHGTG), 166-173 (CSHCHGSG), 188-195 (CPSCHGTG), and 202-209 (CRSCHGDG).

The protein belongs to the DnaJ family. As to quaternary structure, homodimer. Zn(2+) is required as a cofactor.

It is found in the cytoplasm. In terms of biological role, participates actively in the response to hyperosmotic and heat shock by preventing the aggregation of stress-denatured proteins and by disaggregating proteins, also in an autonomous, DnaK-independent fashion. Unfolded proteins bind initially to DnaJ; upon interaction with the DnaJ-bound protein, DnaK hydrolyzes its bound ATP, resulting in the formation of a stable complex. GrpE releases ADP from DnaK; ATP binding to DnaK triggers the release of the substrate protein, thus completing the reaction cycle. Several rounds of ATP-dependent interactions between DnaJ, DnaK and GrpE are required for fully efficient folding. Also involved, together with DnaK and GrpE, in the DNA replication of plasmids through activation of initiation proteins. The protein is Chaperone protein DnaJ of Mannheimia haemolytica (Pasteurella haemolytica).